Reading from the N-terminus, the 165-residue chain is Cyclic pyranopterin monophosphate synthase (165 aa).

Residues 83–85 and 120–121 each bind substrate; these read FCH and ME. Residue D135 is part of the active site.

Belongs to the MoaC family. Homohexamer; trimer of dimers.

The catalysed reaction is (8S)-3',8-cyclo-7,8-dihydroguanosine 5'-triphosphate = cyclic pyranopterin phosphate + diphosphate. It functions in the pathway cofactor biosynthesis; molybdopterin biosynthesis. Functionally, catalyzes the conversion of (8S)-3',8-cyclo-7,8-dihydroguanosine 5'-triphosphate to cyclic pyranopterin monophosphate (cPMP). In Xanthomonas oryzae pv. oryzae (strain MAFF 311018), this protein is Cyclic pyranopterin monophosphate synthase.